The primary structure comprises 439 residues: Methionine aminopeptidase 2-2 (439 aa).

Residues methionine 1 to asparagine 90 are disordered. Over residues glutamate 28–alanine 41 the composition is skewed to acidic residues. The segment covering lysine 56 to glycine 72 has biased composition (basic residues). Histidine 196 contacts substrate. A divalent metal cation contacts are provided by aspartate 216, aspartate 227, and histidine 296. A substrate-binding site is contributed by histidine 304. The a divalent metal cation site is built by glutamate 329 and glutamate 424.

This sequence belongs to the peptidase M24A family. Methionine aminopeptidase eukaryotic type 2 subfamily. The cofactor is Co(2+). Requires Zn(2+) as cofactor. Mn(2+) is required as a cofactor. Fe(2+) serves as cofactor.

The protein resides in the cytoplasm. The catalysed reaction is Release of N-terminal amino acids, preferentially methionine, from peptides and arylamides.. Its function is as follows. Cotranslationally removes the N-terminal methionine from nascent proteins. The N-terminal methionine is often cleaved when the second residue in the primary sequence is small and uncharged (Met-Ala-, Cys, Gly, Pro, Ser, Thr, or Val). The chain is Methionine aminopeptidase 2-2 from Penicillium rubens (strain ATCC 28089 / DSM 1075 / NRRL 1951 / Wisconsin 54-1255) (Penicillium chrysogenum).